A 316-amino-acid polypeptide reads, in one-letter code: N-acetyl-gamma-glutamyl-phosphate reductase (316 aa).

Residue C136 is part of the active site.

This sequence belongs to the NAGSA dehydrogenase family. Type 1 subfamily.

The protein resides in the cytoplasm. It catalyses the reaction N-acetyl-L-glutamate 5-semialdehyde + phosphate + NADP(+) = N-acetyl-L-glutamyl 5-phosphate + NADPH + H(+). The protein operates within amino-acid biosynthesis; L-arginine biosynthesis; N(2)-acetyl-L-ornithine from L-glutamate: step 3/4. Functionally, catalyzes the NADPH-dependent reduction of N-acetyl-5-glutamyl phosphate to yield N-acetyl-L-glutamate 5-semialdehyde. In Xanthomonas campestris pv. campestris (strain ATCC 33913 / DSM 3586 / NCPPB 528 / LMG 568 / P 25), this protein is N-acetyl-gamma-glutamyl-phosphate reductase.